Reading from the N-terminus, the 326-residue chain is Meso-diaminopimelate D-dehydrogenase (326 aa).

Residues 11–14, 35–37, 69–72, 92–94, and 121–125 each bind NADP(+); these read YGNL, TRR, CGGS, SFD, and VGWDP. Residues aspartate 94, aspartate 124, tryptophan 148, 154 to 155, threonine 173, arginine 199, histidine 249, and asparagine 276 contribute to the substrate site; that span reads QG.

It belongs to the diaminopimelate dehydrogenase family. As to quaternary structure, homodimer.

It carries out the reaction meso-2,6-diaminopimelate + NADP(+) + H2O = (S)-2-amino-6-oxoheptanedioate + NH4(+) + NADPH + H(+). It functions in the pathway amino-acid biosynthesis; L-lysine biosynthesis via DAP pathway; DL-2,6-diaminopimelate from (S)-tetrahydrodipicolinate: step 1/1. With respect to regulation, the enzyme is completely inhibited by p-chloromercuribenzoate and HgCl(2) in vitro. Thioglycollate, L-cysteine and Cu(2+) also strongly inhibit the enzyme. Its function is as follows. Catalyzes the reversible NADPH-dependent reductive amination of L-2-amino-6-oxopimelate, the acyclic form of L-tetrahydrodipicolinate, to generate the meso compound, D,L-2,6-diaminopimelate. Probably plays a role in lysine biosynthesis. Is highly specific for meso-2,6-diaminopimelate as the electron donor, since the following amino acids are inert for the oxidative deamination reaction: DL-2-aminopimelate, D-glutamate, L-glutamate, D-aspartate, L-aspartate, D-alanine, L-alanine, D-valine, L-valine, D-lysine, L-lysine, D-phenylalanine, L-phenylalanine, D-leucine, L-leucine, D-threonine, L-threonine, D-serine, L-serine, D-tryptophan, L-tryptophan, D-cysteine, L-cysteine, D-histidine, L-histidine, D-methionine, D-arginine, D-proline, D-asparagine, D-glutamine, D-isoleucine and D-ornithine. Moreover, exclusively uses NADP as the electron acceptor for the oxidative deamination of meso-DAP; NAD is inert. This chain is Meso-diaminopimelate D-dehydrogenase (ddh), found in Ureibacillus thermosphaericus.